The primary structure comprises 347 residues: Probable RNA methyltransferase Lcho_2507 (347 aa).

E89 (proton acceptor) is an active-site residue. The Radical SAM core domain maps to L92–D318. A disulfide bridge links C99 with C323. [4Fe-4S] cluster is bound by residues C106, C110, and C113. S-adenosyl-L-methionine contacts are provided by residues G151–E152, S181, S204–H206, and N280. The S-methylcysteine intermediate role is filled by C323.

Belongs to the radical SAM superfamily. RlmN family. Requires [4Fe-4S] cluster as cofactor.

Its subcellular location is the cytoplasm. The protein is Probable RNA methyltransferase Lcho_2507 of Leptothrix cholodnii (strain ATCC 51168 / LMG 8142 / SP-6) (Leptothrix discophora (strain SP-6)).